We begin with the raw amino-acid sequence, 270 residues long: SAGA-associated factor 29 homolog A (270 aa).

S2 carries the N-acetylserine modification. Residues 85–113 form a disordered region; that stretch reads LPSGPTGQQRRKLEGNEQKRKRMKVDTDV. Residues 95 to 113 show a composition bias toward basic and acidic residues; sequence RKLEGNEQKRKRMKVDTDV. Residues 125–270 enclose the SGF29 C-terminal domain; sequence EAYASLKGEQ…VVALPEGHRQ (146 aa). Histone H3K4me3 N-terminus binding stretches follow at residues 168–170 and 217–220; these read DEE and GTTA. The interval 242 to 245 is histone H3K4me3 binding; it reads FDDD.

Belongs to the SGF29 family. In terms of tissue distribution, expressed in roots, rosette leaves, cauline leaves, stems and flowers.

Its subcellular location is the nucleus. In terms of biological role, chromatin reader component of the transcription regulatory histone acetylation (HAT) complex SAGA. Involved in salt stress tolerance. Enhances the effect of ADA2B in the positive regulation of salt-induced gene expression. The protein is SAGA-associated factor 29 homolog A of Arabidopsis thaliana (Mouse-ear cress).